A 134-amino-acid chain; its full sequence is MTIRPAYRPKIVKKRTKHFIRHQSDRYAKLSHKWRKPKGIDNRVRRRFKGQYLMPNIGYGSNKRTRHMLPTGFKKFLVHNVRELEVLLMQNRVYCGEIAHGVSSKKRKEIVERAKQLSVRLTNPNGRLRSQENE.

The protein belongs to the eukaryotic ribosomal protein eL32 family.

The protein is Large ribosomal subunit protein eL32 (RpL32) of Drosophila melanogaster (Fruit fly).